The sequence spans 251 residues: Ubiquinone/menaquinone biosynthesis C-methyltransferase UbiE (251 aa).

S-adenosyl-L-methionine contacts are provided by residues Thr74, Asp95, 123–124 (NA), and Ser140.

This sequence belongs to the class I-like SAM-binding methyltransferase superfamily. MenG/UbiE family.

It catalyses the reaction a 2-demethylmenaquinol + S-adenosyl-L-methionine = a menaquinol + S-adenosyl-L-homocysteine + H(+). The enzyme catalyses a 2-methoxy-6-(all-trans-polyprenyl)benzene-1,4-diol + S-adenosyl-L-methionine = a 5-methoxy-2-methyl-3-(all-trans-polyprenyl)benzene-1,4-diol + S-adenosyl-L-homocysteine + H(+). It functions in the pathway quinol/quinone metabolism; menaquinone biosynthesis; menaquinol from 1,4-dihydroxy-2-naphthoate: step 2/2. The protein operates within cofactor biosynthesis; ubiquinone biosynthesis. Methyltransferase required for the conversion of demethylmenaquinol (DMKH2) to menaquinol (MKH2) and the conversion of 2-polyprenyl-6-methoxy-1,4-benzoquinol (DDMQH2) to 2-polyprenyl-3-methyl-6-methoxy-1,4-benzoquinol (DMQH2). This is Ubiquinone/menaquinone biosynthesis C-methyltransferase UbiE from Klebsiella pneumoniae (strain 342).